Here is a 384-residue protein sequence, read N- to C-terminus: MATNFTQELYEIGPMAYPLKMISKDVAEHMLGWNIPEEHQDLVHDHWRNFPAVSKYWHYVLALIYTMLMVTSLTGNGIVIWIFSTSKSLRSASNMFVINLAVFDLMMMLEMPLLIMNSFYQRLVGYQLGCDVYAVLGSLSGIGGAITNAVIAFDRYKTISSPLDGRINTVQAGLLIAFTWFWALPFTILPAFRIWGRFVPEGFLTTCSFDYFTEDQDTEVFVACIFVWSYCIPMALICYFYSQLFGAVRLHERMLQEQAKKMNVKSLASNKEDNSRSVEIRIAKVAFTIFFLFICAWTPYAFVTMTGAFGDRTLLTPIATMIPAVCCKVVSCIDPWVYAINHPRYRAELQKRLPWMGVREQDPDAVSTTTSVATAGFQPPAAEA.

Topologically, residues 1-62 (MATNFTQELY…VSKYWHYVLA (62 aa)) are extracellular. A glycan (N-linked (GlcNAc...) asparagine) is linked at N4. Residues 63–83 (LIYTMLMVTSLTGNGIVIWIF) traverse the membrane as a helical segment. Topologically, residues 84–94 (STSKSLRSASN) are cytoplasmic. Residues 95-115 (MFVINLAVFDLMMMLEMPLLI) traverse the membrane as a helical segment. Topologically, residues 116 to 132 (MNSFYQRLVGYQLGCDV) are extracellular. Cysteines 130 and 207 form a disulfide. The helical transmembrane segment at 133-153 (YAVLGSLSGIGGAITNAVIAF) threads the bilayer. Topologically, residues 154-171 (DRYKTISSPLDGRINTVQ) are cytoplasmic. The chain crosses the membrane as a helical span at residues 172 to 192 (AGLLIAFTWFWALPFTILPAF). The Extracellular segment spans residues 193-219 (RIWGRFVPEGFLTTCSFDYFTEDQDTE). A helical membrane pass occupies residues 220-240 (VFVACIFVWSYCIPMALICYF). The Cytoplasmic segment spans residues 241–284 (YSQLFGAVRLHERMLQEQAKKMNVKSLASNKEDNSRSVEIRIAK). A helical membrane pass occupies residues 285–305 (VAFTIFFLFICAWTPYAFVTM). Residues 306 to 312 (TGAFGDR) lie on the Extracellular side of the membrane. Residues 313 to 333 (TLLTPIATMIPAVCCKVVSCI) traverse the membrane as a helical segment. Over 334 to 384 (DPWVYAINHPRYRAELQKRLPWMGVREQDPDAVSTTTSVATAGFQPPAAEA) the chain is Cytoplasmic.

This sequence belongs to the G-protein coupled receptor 1 family. Opsin subfamily. In terms of tissue distribution, in the retina, expression is essentially uniformly distributed but a higher level is seen in the ventral region where the B-cells are localized.

Its subcellular location is the membrane. In terms of biological role, visual pigments are the light-absorbing molecules that mediate vision. They consist of an apoprotein, opsin, covalently linked to cis-retinal. May play a role in photoperiodic photoreception. The polypeptide is Opsin-3 (OP3) (Manduca sexta (Tobacco hawkmoth)).